A 1272-amino-acid chain; its full sequence is Regulator of nonsense transcripts 2 (1272 aa).

Residues methionine 1–glutamate 114 show a composition bias toward basic and acidic residues. Disordered stretches follow at residues methionine 1 to glutamate 126, aspartate 370 to glycine 389, asparagine 423 to threonine 445, and cysteine 490 to aspartate 517. A coiled-coil region spans residues glutamate 54 to alanine 134. The sufficient for interaction with UPF1 stretch occupies residues lysine 94–glutamate 133. In terms of domain architecture, MIF4G 1 spans leucine 168–lysine 431. 2 stretches are compositionally biased toward basic and acidic residues: residues proline 428–proline 439 and cysteine 490–serine 513. A coiled-coil region spans residues glutamate 487–serine 559. MIF4G domains lie at aspartate 569–proline 758 and glutamate 773–lysine 986. Residues glycine 711–threonine 928 are sufficient for interaction with UPF3A and UPF3B. A sufficient for interaction with EIF4A1 and EIF1 region spans residues proline 757 to arginine 1272. The tract at residues glutamate 839–valine 859 is binds to UPF3B. Positions aspartate 1018–lysine 1098 are disordered. The span at glutamate 1027–threonine 1076 shows a compositional bias: acidic residues. Residues lysine 1084–arginine 1272 form a sufficient for interaction with UPF1 C-terminus region. Position 1088 is a phosphothreonine (threonine 1088). 2 interaction with UPF1 regions span residues valine 1105–serine 1129 and aspartate 1167–glutamate 1207. Residues valine 1105–histidine 1198 are necessary for interaction with UPF1. Positions asparagine 1220–arginine 1272 are disordered.

As to quaternary structure, found in a post-splicing messenger ribonucleoprotein (mRNP) complex. Associates with the exon junction complex (EJC). Interacts with SMG1, EST1A, UPF1, UPF3A, UPF3B, EIF4A1 and EIF1. In terms of tissue distribution, ubiquitous.

It localises to the cytoplasm. The protein resides in the perinuclear region. Functionally, involved in nonsense-mediated decay (NMD) of mRNAs containing premature stop codons by associating with the nuclear exon junction complex (EJC). Recruited by UPF3B associated with the EJC core at the cytoplasmic side of the nuclear envelope and the subsequent formation of an UPF1-UPF2-UPF3 surveillance complex (including UPF1 bound to release factors at the stalled ribosome) is believed to activate NMD. In cooperation with UPF3B stimulates both ATPase and RNA helicase activities of UPF1. Binds spliced mRNA. This Homo sapiens (Human) protein is Regulator of nonsense transcripts 2.